Reading from the N-terminus, the 212-residue chain is MLLCRLLFLECLIVIVDFYFDFLSPFSYLANHRLSKLAQDYGFSIRYYAIDLARVKIAIGNVGPSNRDLIVKLDYLKVDLQRWAELYEIPLVFPANYNSRRMNTGLYYSGAMAQTGAYVNVVFNAVWGDGIAPDLESLPALVSEKLGWDRSAFEDFISSDAATERYDEQTHAAIERKVFGVPTMFLGDEMWWGNDRLFMLENAVGGAPVNGE.

Catalysis depends on Ser-24, which acts as the Nucleophile. Ser-24 contributes to the glutathione binding site. Substrate is bound by residues Lys-56, 66–67 (NR), and Tyr-97. Residues Val-181 and 192-195 (WGND) contribute to the glutathione site.

This sequence belongs to the GST superfamily. NadH family. Glutathione is required as a cofactor.

It catalyses the reaction 2-hydroxychromene-2-carboxylate = (3E)-4-(2-hydroxyphenyl)-2-oxobut-3-enoate. The protein operates within aromatic compound metabolism; naphthalene degradation. Its function is as follows. Involved in the naphthalene catabolic pathway. Catalyzes the reversible glutathione-dependent isomerization of 2-hydroxychromene-2-carboxylate (HCCA) to trans-O-hydroxybenzylidenepyruvate (THBPA). This chain is 2-hydroxychromene-2-carboxylate isomerase (doxJ), found in Pseudomonas sp. (strain C18).